The sequence spans 330 residues: Aspartate--ammonia ligase (330 aa).

It belongs to the class-II aminoacyl-tRNA synthetase family. AsnA subfamily.

The protein localises to the cytoplasm. The enzyme catalyses L-aspartate + NH4(+) + ATP = L-asparagine + AMP + diphosphate + H(+). It functions in the pathway amino-acid biosynthesis; L-asparagine biosynthesis; L-asparagine from L-aspartate (ammonia route): step 1/1. In Actinobacillus pleuropneumoniae serotype 7 (strain AP76), this protein is Aspartate--ammonia ligase.